The chain runs to 195 residues: Pyridoxal 5'-phosphate synthase subunit PdxT (195 aa).

Residue 46-48 (GES) coordinates L-glutamine. C78 (nucleophile) is an active-site residue. Residues R106 and 134–135 (IR) contribute to the L-glutamine site. Residues H170 and E172 each act as charge relay system in the active site.

It belongs to the glutaminase PdxT/SNO family. As to quaternary structure, in the presence of PdxS, forms a dodecamer of heterodimers. Only shows activity in the heterodimer.

It catalyses the reaction aldehydo-D-ribose 5-phosphate + D-glyceraldehyde 3-phosphate + L-glutamine = pyridoxal 5'-phosphate + L-glutamate + phosphate + 3 H2O + H(+). The catalysed reaction is L-glutamine + H2O = L-glutamate + NH4(+). It functions in the pathway cofactor biosynthesis; pyridoxal 5'-phosphate biosynthesis. Its function is as follows. Catalyzes the hydrolysis of glutamine to glutamate and ammonia as part of the biosynthesis of pyridoxal 5'-phosphate. The resulting ammonia molecule is channeled to the active site of PdxS. This chain is Pyridoxal 5'-phosphate synthase subunit PdxT, found in Pseudothermotoga lettingae (strain ATCC BAA-301 / DSM 14385 / NBRC 107922 / TMO) (Thermotoga lettingae).